The following is a 176-amino-acid chain: ATP-dependent protease subunit HslV (176 aa).

The active site involves Thr2. The Na(+) site is built by Gly157, Cys160, and Thr163.

The protein belongs to the peptidase T1B family. HslV subfamily. As to quaternary structure, a double ring-shaped homohexamer of HslV is capped on each side by a ring-shaped HslU homohexamer. The assembly of the HslU/HslV complex is dependent on binding of ATP.

It is found in the cytoplasm. It carries out the reaction ATP-dependent cleavage of peptide bonds with broad specificity.. Allosterically activated by HslU binding. Protease subunit of a proteasome-like degradation complex believed to be a general protein degrading machinery. In Pectobacterium atrosepticum (strain SCRI 1043 / ATCC BAA-672) (Erwinia carotovora subsp. atroseptica), this protein is ATP-dependent protease subunit HslV.